The primary structure comprises 215 residues: 3-isopropylmalate dehydratase small subunit (215 aa).

This sequence belongs to the LeuD family. LeuD type 1 subfamily. In terms of assembly, heterodimer of LeuC and LeuD.

The enzyme catalyses (2R,3S)-3-isopropylmalate = (2S)-2-isopropylmalate. It participates in amino-acid biosynthesis; L-leucine biosynthesis; L-leucine from 3-methyl-2-oxobutanoate: step 2/4. Its function is as follows. Catalyzes the isomerization between 2-isopropylmalate and 3-isopropylmalate, via the formation of 2-isopropylmaleate. This chain is 3-isopropylmalate dehydratase small subunit, found in Polynucleobacter necessarius subsp. necessarius (strain STIR1).